The following is a 623-amino-acid chain: uncharacterized protein (623 aa).

The GAF domain occupies Thr-28–Gln-171. One can recognise a GGDEF domain in the interval Gly-212–Ala-345. The 256-residue stretch at Arg-354 to Arg-609 folds into the EAL domain.

This is an uncharacterized protein from Mycobacterium tuberculosis (strain CDC 1551 / Oshkosh).